A 798-amino-acid chain; its full sequence is Shutoff protein (798 aa).

Residues 1–14 (MESTADGDKARGEE) show a composition bias toward basic and acidic residues. The tract at residues 1–123 (MESTADGDKA…SHSSDSELGC (123 aa)) is disordered. A compositionally biased stretch (acidic residues) spans 33-49 (APEDEHPDDGEPDEPAD). Over residues 68 to 80 (GGRDAECDGEAAR) the composition is skewed to basic and acidic residues. Over residues 86–105 (DESSAPTTPSTAVRRSSGES) the composition is skewed to polar residues. The segment at 309–376 (LMEVLLQPFA…GRPLYRSARA (68 aa)) is binding to host EIF4G. Positions 379–497 (SVFREPSSIK…AIYALETPTE (119 aa)) constitute an RRM domain. Tyr-711 bears the Phosphotyrosine; by host mark. The interval 740-798 (YADHARGAATSAEPSRALRPTSVATAAGNRTRGCSSARYRLGPTLRRRSNSSWPREWST) is disordered. Over residues 789-798 (NSSWPREWST) the composition is skewed to polar residues.

This sequence belongs to the adenoviridae shutoff protein family. As to quaternary structure, monomer. Interacts with hexon protein; this interaction allows chaperoning and trimerization of hexon proteins. Interacts (via N-terminus) with host initiation factor EIF4G (via C-terminus). Interacts (via RRM domain) with viral mRNAs that contain the tripartite leader; this interaction allows ribosome shunting and expression of viral late mRNAs. Post-translationally, might be cleaved by the viral protease. Phosphorylated. Tyrosine phosphorylation enhances preferential binding to tripartite leader mRNAs and allows ribosome shunting. In terms of processing, methylated. Asymmetric dimethylation by host PRMT1 of the Arg/Gly-rich region may regulate shutoff protein binding to hexon and promote the capsid assembly in the nucleus.

The protein localises to the host cytoplasm. Protein that inhibits host translation while promoting late viral translation by ribosome shunting. Blocks host cap-dependent translation by binding to eIF4G, displacing MKNK1 from cap initiation complexes and preventing EIF4E phosphorylation. Binds to the tripartite leader sequence of viral late mRNAs and recruits host eIF4G, PABPC1/poly-A binding protein and 40S ribosomes subunits on viral mRNAs, allowing ribosome shunting and efficient translation of late viral mRNAs even though conventional translation via ribosome scanning from the cap has been shut off in the host cell. During assembly, acts as a chaperone protein that helps hexon proteins assembly into trimers. The sequence is that of Shutoff protein from Galliformes (FAdV-10).